Reading from the N-terminus, the 849-residue chain is uncharacterized protein (849 aa).

Helical transmembrane passes span 587–607 (VALGEALAAVTLAVGDFLGLF) and 620–640 (AGILTLLAAFESIYSFITGDW).

The protein localises to the cell membrane. This is an uncharacterized protein from Methanocaldococcus jannaschii (strain ATCC 43067 / DSM 2661 / JAL-1 / JCM 10045 / NBRC 100440) (Methanococcus jannaschii).